Here is a 197-residue protein sequence, read N- to C-terminus: Caspase recruitment domain-containing protein 16 (197 aa).

The CARD domain occupies 1-91; that stretch reads MADKVLKEKR…YLAETLGLSA (91 aa).

Homooligomer. Interacts with CASP1, CASP4, CARD8 and RIPK2. In terms of tissue distribution, widely expressed. Expressed at higher level in placenta, spleen, lymph node and bone marrow. Weakly or not expressed in thymus.

In terms of biological role, caspase inhibitor. Acts as a regulator of procaspase-1/CASP1 activation implicated in the regulation of the proteolytic maturation of pro-interleukin-1 beta (IL1B) and its release during inflammation. Inhibits the release of IL1B in response to LPS in monocytes. Also induces NF-kappa-B activation during the pro-inflammatory cytokine response. Also able to inhibit CASP1-mediated neuronal cell death, TNF-alpha, hypoxia-, UV-, and staurosporine-mediated cell death but not ER stress-mediated cell death. Acts by preventing activation of caspases CASP1 and CASP4, possibly by preventing the interaction between CASP1 and RIPK2. In Homo sapiens (Human), this protein is Caspase recruitment domain-containing protein 16 (CARD16).